The sequence spans 86 residues: High affinity immunoglobulin epsilon receptor subunit gamma (86 aa).

The signal sequence occupies residues 1–18 (MISAVILFLLLLVEQAAA). The Extracellular segment spans residues 19 to 23 (LGEPQ). Residues 24 to 44 (LCYILDAVLFLYGIVLTLLYC) form a helical membrane-spanning segment. The Cytoplasmic portion of the chain corresponds to 45 to 86 (RLKIQVRKAAIASREKADAVYTGLNTRSQETYETLKHEKPPQ). The ITAM domain maps to 54-82 (AIASREKADAVYTGLNTRSQETYETLKHE). Phosphotyrosine occurs at positions 65 and 76. The residue at position 78 (threonine 78) is a Phosphothreonine.

Belongs to the CD3Z/FCER1G family. In terms of assembly, igE Fc receptor is a tetramer of an alpha chain, a beta chain, and two disulfide linked gamma chains. Associates with FCGR1A; forms a functional signaling complex. The signaling subunit of immunoglobulin gamma (IgG) Fc receptor complex. As a homodimer or a heterodimer of CD247 and FCER1G, associates with the ligand binding subunit FCGR3A to form a functional receptor complex. Associates with CLEC6A. Interacts with CLEC4E. Interacts (via ITAM domain) with SYK (via SH2 domains); activates SYK, enabling integrin-mediated activation of neutrophils and macrophages. Interacts with CSF2RB and recruits SYK in response to IL3 stimulation; this interaction is direct. Interacts with CD300LH; the interaction may be indirect. Interacts with CD300LD. Interacts with TARM1. As to expression, expressed in mast cells (at protein level). Expressed in basophils (at protein level).

The protein localises to the cell membrane. Adapter protein containing an immunoreceptor tyrosine-based activation motif (ITAM) that transduces activation signals from various immunoreceptors. As a component of the high-affinity immunoglobulin E (IgE) receptor, mediates allergic inflammatory signaling in mast cells. As a constitutive component of interleukin-3 receptor complex, selectively mediates interleukin 4/IL4 production by basophils, priming T-cells toward effector T-helper 2 subset. Associates with pattern recognition receptors CLEC4D and CLEC4E to form a functional signaling complex in myeloid cells. Binding of mycobacterial trehalose 6,6'-dimycolate (TDM) to this receptor complex leads to phosphorylation of ITAM, triggering activation of SYK, CARD9 and NF-kappa-B, consequently driving maturation of antigen-presenting cells and shaping antigen-specific priming of T-cells toward effector T-helper 1 and T-helper 17 cell subtypes. May function cooperatively with other activating receptors. Functionally linked to integrin beta-2/ITGB2-mediated neutrophil activation. Also involved in integrin alpha-2/ITGA2-mediated platelet activation. This chain is High affinity immunoglobulin epsilon receptor subunit gamma, found in Mus musculus (Mouse).